A 577-amino-acid chain; its full sequence is Arginine--tRNA ligase (577 aa).

The 'HIGH' region signature appears at 122–132; the sequence is PNVAKEMHVGH.

It belongs to the class-I aminoacyl-tRNA synthetase family. Monomer.

The protein resides in the cytoplasm. It carries out the reaction tRNA(Arg) + L-arginine + ATP = L-arginyl-tRNA(Arg) + AMP + diphosphate. This chain is Arginine--tRNA ligase, found in Shigella dysenteriae serotype 1 (strain Sd197).